Here is a 286-residue protein sequence, read N- to C-terminus: Polyamine aminopropyltransferase (286 aa).

Positions 2–237 (DLWFSEVHTP…GYWLFGFASK (236 aa)) constitute a PABS domain. Q31 provides a ligand contact to S-methyl-5'-thioadenosine. Position 86 (D86) interacts with spermidine. S-methyl-5'-thioadenosine is bound by residues E106 and 137–138 (NG). The active-site Proton acceptor is D155.

Belongs to the spermidine/spermine synthase family. As to quaternary structure, homodimer or homotetramer.

It is found in the cytoplasm. It carries out the reaction S-adenosyl 3-(methylsulfanyl)propylamine + putrescine = S-methyl-5'-thioadenosine + spermidine + H(+). Its pathway is amine and polyamine biosynthesis; spermidine biosynthesis; spermidine from putrescine: step 1/1. Functionally, catalyzes the irreversible transfer of a propylamine group from the amino donor S-adenosylmethioninamine (decarboxy-AdoMet) to putrescine (1,4-diaminobutane) to yield spermidine. In Streptococcus pneumoniae serotype 4 (strain ATCC BAA-334 / TIGR4), this protein is Polyamine aminopropyltransferase.